The following is a 181-amino-acid chain: Cyclic AMP-dependent transcription factor ATF-3 (181 aa).

Lys78 is covalently cross-linked (Glycyl lysine isopeptide (Lys-Gly) (interchain with G-Cter in SUMO2)). One can recognise a bZIP domain in the interval 86 to 149 (DERKKRRRER…QHLIYMLNLH (64 aa)). A basic motif region spans residues 88–110 (RKKRRRERNKIAAAKCRNKKKEK). Residues 114–142 (LQKESEKLESVNAELKAQIEELKNEKQHL) form a leucine-zipper region. At Thr162 the chain carries Phosphothreonine. Lys175 is covalently cross-linked (Glycyl lysine isopeptide (Lys-Gly) (interchain with G-Cter in SUMO2)).

This sequence belongs to the bZIP family. ATF subfamily. As to quaternary structure, binds DNA as a homodimer or a heterodimer. Interacts with KAT5; promoting KAT5 autoacetylation and KAT5 deubiquitination by USP7.

Its subcellular location is the nucleus. Functionally, this protein binds the cAMP response element (CRE) (consensus: 5'-GTGACGT[AC][AG]-3'), a sequence present in many viral and cellular promoters. Represses transcription from promoters with ATF sites. It may repress transcription by stabilizing the binding of inhibitory cofactors at the promoter. Its function is as follows. Activates transcription presumably by sequestering inhibitory cofactors away from the promoters. In terms of biological role, stress-induced isoform, counteracts the transcriptional repression of isoform 1. This chain is Cyclic AMP-dependent transcription factor ATF-3, found in Homo sapiens (Human).